A 138-amino-acid chain; its full sequence is Nucleoside diphosphate kinase (138 aa).

6 residues coordinate ATP: Lys-11, Phe-59, Arg-87, Thr-93, Arg-104, and Asn-114. His-117 (pros-phosphohistidine intermediate) is an active-site residue.

The protein belongs to the NDK family. The cofactor is Mg(2+).

It localises to the cytoplasm. It catalyses the reaction a 2'-deoxyribonucleoside 5'-diphosphate + ATP = a 2'-deoxyribonucleoside 5'-triphosphate + ADP. The catalysed reaction is a ribonucleoside 5'-diphosphate + ATP = a ribonucleoside 5'-triphosphate + ADP. In terms of biological role, major role in the synthesis of nucleoside triphosphates other than ATP. The ATP gamma phosphate is transferred to the NDP beta phosphate via a ping-pong mechanism, using a phosphorylated active-site intermediate. This Saccharolobus islandicus (strain Y.N.15.51 / Yellowstone #2) (Sulfolobus islandicus) protein is Nucleoside diphosphate kinase.